Here is a 704-residue protein sequence, read N- to C-terminus: Zinc finger protein MSN2 (704 aa).

The interval 84–246 (PSTTDNSLHL…SISNSNSNST (163 aa)) is disordered. The segment covering 91–112 (LHLKADSNKNRDARTIENDSEI) has biased composition (basic and acidic residues). The span at 113 to 133 (KSTNNASGSGANQYTTLTSPY) shows a compositional bias: polar residues. Residues 141–166 (NMNNPLQSPSPSSVPQNPTINPPINT) show a composition bias toward low complexity. 2 stretches are compositionally biased toward polar residues: residues 167–193 (ASNETNLSPQTSNGNETLISPRAQQHT) and 204–220 (NGANSNLFIDTNPNNLN). Positions 228-246 (NSDTNSYSNSISNSNSNST) are enriched in low complexity. The 9aaTAD signature appears at 261 to 269 (SMLDDYVSS). Phosphoserine occurs at positions 288 and 304. Positions 418 to 437 (NRVQHKQLTSSHNNSSTNMK) are disordered. Polar residues predominate over residues 426–437 (TSSHNNSSTNMK). Phosphoserine is present on residues S451 and S582. Positions 592–634 (LTNQQNNISSSSVNSTGNGAGVTKERRPSYRRKSMTPSRRSSV) are disordered. Positions 593–608 (TNQQNNISSSSVNSTG) are enriched in low complexity. Residue S633 is modified to Phosphoserine. 2 C2H2-type zinc fingers span residues 647 to 665 (FHCHICPKSFKRSEHLKRH) and 676 to 698 (FACHICDKKFSRSDNLSQHIKTH).

In terms of assembly, interacts with WHI2.

It localises to the cytoplasm. It is found in the nucleus. Functionally, positive transcriptional factor that acts as a component of the stress responsive system. Recognizes and binds to the stress response element (STRE) which is involved in the response to various forms of stress (heat, oxidative, osmotic, etc.). Involved in the regulation of the CTT1, DDR2, HSP12 genes. May be regulated via WHI2-PSR1 complex phosphatase activity. This Saccharomyces cerevisiae (strain ATCC 204508 / S288c) (Baker's yeast) protein is Zinc finger protein MSN2 (MSN2).